The sequence spans 626 residues: uncharacterized protein (626 aa).

A helical transmembrane segment spans residues 103–123; sequence AGALLVKFFPLLLLYPLTYLA. The 419-residue stretch at 200–618 folds into the Protein kinase domain; sequence FENREPVGSG…DILEAARPFL (419 aa). ATP-binding positions include 206 to 214 and Lys311; that span reads VGSGCVAQV. Asp445 functions as the Proton acceptor in the catalytic mechanism.

Belongs to the protein kinase superfamily. ADCK protein kinase family.

It localises to the mitochondrion. Its subcellular location is the membrane. The function of this protein is not yet clear. It is not known if it has protein kinase activity and what type of substrate it would phosphorylate (Ser, Thr or Tyr). Involved in the mitochondrial import of CoQ precursors, plays a role in muscle mitochondrial function and fatty acid beta-oxidation. This is an uncharacterized protein from Homo sapiens (Human).